We begin with the raw amino-acid sequence, 116 residues long: Phage-like element PBSX protein XkdD (116 aa).

The chain is Phage-like element PBSX protein XkdD (xkdD) from Bacillus subtilis (strain 168).